Reading from the N-terminus, the 355-residue chain is Tyrosine recombinase XerC (355 aa).

The 86-residue stretch at 4–89 (TQFDGDIDSF…AVRGFFAWAY (86 aa)) folds into the Core-binding (CB) domain. The tract at residues 137-181 (KDDGGAAAAPGSGKAAGKTADKSADTVNRSEAPARADKRDNARVT) is disordered. The span at 141–154 (GAAAAPGSGKAAGK) shows a compositional bias: low complexity. The Tyr recombinase domain occupies 158 to 349 (KSADTVNRSE…SIEQLKNRYG (192 aa)). The segment covering 168–178 (APARADKRDNA) has biased composition (basic and acidic residues). Active-site residues include R200, K224, H301, R304, and H327. Catalysis depends on Y336, which acts as the O-(3'-phospho-DNA)-tyrosine intermediate.

Belongs to the 'phage' integrase family. XerC subfamily. Forms a cyclic heterotetrameric complex composed of two molecules of XerC and two molecules of XerD.

The protein resides in the cytoplasm. Its function is as follows. Site-specific tyrosine recombinase, which acts by catalyzing the cutting and rejoining of the recombining DNA molecules. The XerC-XerD complex is essential to convert dimers of the bacterial chromosome into monomers to permit their segregation at cell division. It also contributes to the segregational stability of plasmids. This is Tyrosine recombinase XerC from Bifidobacterium longum (strain DJO10A).